Here is a 467-residue protein sequence, read N- to C-terminus: Ammonium transporter Rh type C (467 aa).

At 1–9 (MAWNTNLRW) the chain is on the cytoplasmic side. Residues 10–30 (RLPLLCLVLEVAMVVLFGLFV) form a helical membrane-spanning segment. Residues 31-61 (RYSPDADSSWSNEKRKGNITSDLENEFYYRY) lie on the Extracellular side of the membrane. An N-linked (GlcNAc...) asparagine glycan is attached at Asn48. Residues 62–82 (PSFQDVHVMVFLGFGFLMTFL) traverse the membrane as a helical segment. At 83 to 86 (QRYG) the chain is on the cytoplasmic side. Residues 87 to 107 (YCALGFNFLLAALGVQWALLM) traverse the membrane as a helical segment. Over 108-131 (QGWFQYTKDRLILLGIKNLIDADS) the chain is Extracellular. 2 helical membrane passes run 132–152 (CVAS…PVQM) and 153–173 (LLMT…LLHV). The Extracellular segment spans residues 174–179 (LEVKDA). The chain crosses the membrane as a helical span at residues 180 to 200 (GGSITIHIFGAYFGLTVTWIL). Residues 201 to 219 (YRHNLDHSRERQSSVYHSN) lie on the Cytoplasmic side of the membrane. Residues 220 to 240 (LFAMIGTLFLWIYWPSFNSAM) traverse the membrane as a helical segment. Residues 241-251 (SNYGDAQHRAA) lie on the Extracellular side of the membrane. The helical transmembrane segment at 252 to 272 (INTYCSLAASVLTSVAMSSVL) threads the bilayer. Topologically, residues 273-282 (HKKGKLDMVH) are cytoplasmic. Residues 283–303 (IQNATLAGGVGVGTAAEMMLM) traverse the membrane as a helical segment. Residue Pro304 is a topological domain, extracellular. A helical transmembrane segment spans residues 305-325 (YGALIVGFICGAVSTLGFVYL). Residues 326 to 343 (TPFLESRLRIQDTCGIHN) lie on the Cytoplasmic side of the membrane. The chain crosses the membrane as a helical span at residues 344 to 364 (LHGIPGLIGAIVGAVTAAYAS). Residues 365–391 (PDGDRGFVYPFGFHNEKDEKVQGRFQA) are Extracellular-facing. A helical transmembrane segment spans residues 392-412 (FGLLLTLAIAMVGGTIMGLIL). Residues 413–467 (KLPFWGQAMDEDCFDDSIYWEMHEEKSSSPEDHTHKPSVPTEPVEQPTSSATLAP) lie on the Cytoplasmic side of the membrane. Basic and acidic residues predominate over residues 436-447 (EEKSSSPEDHTH). The segment at 436–467 (EEKSSSPEDHTHKPSVPTEPVEQPTSSATLAP) is disordered. Positions 458–467 (QPTSSATLAP) are enriched in polar residues.

This sequence belongs to the ammonium transporter (TC 2.A.49) family. Rh subfamily. In terms of assembly, homotrimer. Post-translationally, N-glycosylated.

The protein resides in the cell membrane. It is found in the apical cell membrane. The catalysed reaction is NH4(+)(in) = NH4(+)(out). The enzyme catalyses methylamine(out) = methylamine(in). It carries out the reaction CO2(out) = CO2(in). Functionally, ammonium transporter involved in the maintenance of acid-base homeostasis. Transports ammonium and its related derivative methylammonium across the plasma membrane of epithelial cells likely contributing to renal transepithelial ammonia transport and ammonia metabolism. Postulated to primarily mediate an electroneutral bidirectional transport of NH3 ammonia species according to a mechanism that implies interaction of an NH4(+) ion with acidic residues of the pore entry followed by dissociation of NH4(+) into NH3 and H(+). As a result NH3 transits through the central pore and is protonated on the extracellular side reforming NH4(+). May act as a CO2 channel providing for renal acid secretion. In Oryctolagus cuniculus (Rabbit), this protein is Ammonium transporter Rh type C (RHCG).